The chain runs to 61 residues: Putative antitoxin VapB21 (61 aa).

The protein belongs to the UPF0165 family.

Functionally, possibly the antitoxin component of a type II toxin-antitoxin (TA) system. Its cognate toxin is VapC21 (Potential). The protein is Putative antitoxin VapB21 (vapB21) of Archaeoglobus fulgidus (strain ATCC 49558 / DSM 4304 / JCM 9628 / NBRC 100126 / VC-16).